Reading from the N-terminus, the 500-residue chain is Cytochrome P450 71B38 (500 aa).

The helical transmembrane segment at 3-23 (IFLCFLLLLPLSLILFKKLLP) threads the bilayer. Cys-441 lines the heme pocket.

It belongs to the cytochrome P450 family. Heme is required as a cofactor.

The protein localises to the membrane. The chain is Cytochrome P450 71B38 (CYP71B38) from Arabidopsis thaliana (Mouse-ear cress).